Reading from the N-terminus, the 656-residue chain is UvrABC system protein B (656 aa).

In terms of domain architecture, Helicase ATP-binding spans lysine 29–glutamine 414. Glycine 42–threonine 49 is a binding site for ATP. A Beta-hairpin motif is present at residues tyrosine 95–valine 118. Positions glutamine 434–leucine 596 constitute a Helicase C-terminal domain. The region spanning alanine 614 to glutamate 649 is the UVR domain.

It belongs to the UvrB family. In terms of assembly, forms a heterotetramer with UvrA during the search for lesions. Interacts with UvrC in an incision complex.

It localises to the cytoplasm. Its function is as follows. The UvrABC repair system catalyzes the recognition and processing of DNA lesions. A damage recognition complex composed of 2 UvrA and 2 UvrB subunits scans DNA for abnormalities. Upon binding of the UvrA(2)B(2) complex to a putative damaged site, the DNA wraps around one UvrB monomer. DNA wrap is dependent on ATP binding by UvrB and probably causes local melting of the DNA helix, facilitating insertion of UvrB beta-hairpin between the DNA strands. Then UvrB probes one DNA strand for the presence of a lesion. If a lesion is found the UvrA subunits dissociate and the UvrB-DNA preincision complex is formed. This complex is subsequently bound by UvrC and the second UvrB is released. If no lesion is found, the DNA wraps around the other UvrB subunit that will check the other stand for damage. This is UvrABC system protein B from Mycoplasma genitalium (strain ATCC 33530 / DSM 19775 / NCTC 10195 / G37) (Mycoplasmoides genitalium).